Consider the following 341-residue polypeptide: Methionine import ATP-binding protein MetN (341 aa).

In terms of domain architecture, ABC transporter spans 2-237; it reads IELCGLKKSF…PESLARKMLY (236 aa). An ATP-binding site is contributed by 34–41; it reads GKSGAGKS.

Belongs to the ABC transporter superfamily. Methionine importer (TC 3.A.1.24) family. The complex is composed of two ATP-binding proteins (MetN), two transmembrane proteins (MetI) and a solute-binding protein (MetQ).

The protein resides in the cell inner membrane. The enzyme catalyses L-methionine(out) + ATP + H2O = L-methionine(in) + ADP + phosphate + H(+). It carries out the reaction D-methionine(out) + ATP + H2O = D-methionine(in) + ADP + phosphate + H(+). Its function is as follows. Part of the ABC transporter complex MetNIQ involved in methionine import. Responsible for energy coupling to the transport system. This is Methionine import ATP-binding protein MetN from Legionella pneumophila (strain Lens).